An 80-amino-acid polypeptide reads, in one-letter code: Putative defensin-like protein 23 (80 aa).

A signal peptide spans 1 to 25 (MTTTMKIMSFAMLLVLLFSIDVVEG). 4 disulfide bridges follow: Cys-31/Cys-80, Cys-41/Cys-66, Cys-50/Cys-76, and Cys-54/Cys-78.

This sequence belongs to the DEFL family.

The protein resides in the secreted. The chain is Putative defensin-like protein 23 from Arabidopsis thaliana (Mouse-ear cress).